We begin with the raw amino-acid sequence, 224 residues long: Vesicle transport through interaction with t-SNAREs homolog 1A (224 aa).

Topologically, residues 1–199 (MSADFEGYEQ…GMLRRIIQNR (199 aa)) are cytoplasmic. Coiled-coil stretches lie at residues 31-92 (PDEK…KRSR) and 106-185 (DAGN…GKSS). A helical; Anchor for type IV membrane protein membrane pass occupies residues 200–220 (ILLVILGIIVVITILTAITFF). The Vesicular portion of the chain corresponds to 221 to 224 (VRGH).

This sequence belongs to the VTI1 family. Interacts with distinct SNARE complexes that contain either STX5 or STX6. Interacts with NAPA and, to a lesser extent, with NAPG. Identified in a complex containing STX6, STX12, VAMP4 and VTI1A. In terms of tissue distribution, specifically expressed in the neuronal tissues cerebellum, cortex and hippocampus. Isoform 1/VTI1A is expressed in the same neuronal tissues but also in lung, liver, kidney and spleen.

It is found in the membrane. The protein localises to the cytoplasmic vesicle. The protein resides in the secretory vesicle. It localises to the synaptic vesicle membrane. Its subcellular location is the clathrin-coated vesicle membrane. It is found in the golgi apparatus membrane. Its function is as follows. V-SNARE that mediates vesicle transport pathways through interactions with t-SNAREs on the target membrane. These interactions are proposed to mediate aspects of the specificity of vesicle trafficking and to promote fusion of the lipid bilayers. Involved in vesicular transport from the late endosomes to the trans-Golgi network. Along with VAMP7, involved in an non-conventional RAB1-dependent traffic route to the cell surface used by KCNIP1 and KCND2. May be concerned with increased secretion of cytokines associated with cellular senescence. This chain is Vesicle transport through interaction with t-SNAREs homolog 1A (Vti1a), found in Rattus norvegicus (Rat).